The sequence spans 364 residues: MSGNSIGQNFVVTTFGESHGVALGCIIDGCPPGLELTEADMQHDLDRRRPGTSRYTTARREPDEVRILSGVFEGKTTGTSIGLLIENTDQRSQDYSNIKDLFRPGHADYTYQQKYGMRDYRGGGRSSARETAMRVAAGAVAKKYLKQVHCIEIYGFMSQLGPICAETIDLDQIEQNAFFFPDASKLEALDEYMRELKKSGDSIGAKISVIATGVPVGLGEPVFDRLDADIAHALMGINAVKGVEIGDGFGVVTQKGSEGRDLMSPQGFESNHAGGVLGGISSGQPIIAHIALKPTSSISVPGQSMTAQGEMAEVVTKGRHDPCVGIRAVPIAEAMLAIVLMDHLLRHRAQNQDVRSLTPVLGMR.

A disordered region spans residues 41 to 60 (MQHDLDRRRPGTSRYTTARR). 2 residues coordinate NADP(+): Arg-48 and Arg-54. FMN-binding positions include 125–127 (RSS), 238–239 (NA), Gly-278, 293–297 (KPTSS), and Arg-319.

The protein belongs to the chorismate synthase family. Homotetramer. It depends on FMNH2 as a cofactor.

It carries out the reaction 5-O-(1-carboxyvinyl)-3-phosphoshikimate = chorismate + phosphate. Its pathway is metabolic intermediate biosynthesis; chorismate biosynthesis; chorismate from D-erythrose 4-phosphate and phosphoenolpyruvate: step 7/7. Catalyzes the anti-1,4-elimination of the C-3 phosphate and the C-6 proR hydrogen from 5-enolpyruvylshikimate-3-phosphate (EPSP) to yield chorismate, which is the branch point compound that serves as the starting substrate for the three terminal pathways of aromatic amino acid biosynthesis. This reaction introduces a second double bond into the aromatic ring system. The chain is Chorismate synthase from Shewanella putrefaciens (strain CN-32 / ATCC BAA-453).